A 143-amino-acid polypeptide reads, in one-letter code: Small ribosomal subunit protein uS12 (143 aa).

Residues 1–20 (MGKCRGLRTARKLRSHRRDQ) are compositionally biased toward basic residues. The segment at 1-26 (MGKCRGLRTARKLRSHRRDQKWHDKQ) is disordered. A Glycyl lysine isopeptide (Lys-Gly) (interchain with G-Cter in SUMO2) cross-link involves residue Lys-37. Position 54 is an N6-succinyllysine (Lys-54). Pro-62 is modified (3-hydroxyproline). The residue at position 135 (Lys-135) is an N6-acetyllysine.

Belongs to the universal ribosomal protein uS12 family. Component of the 40S small ribosomal subunit. Part of the small subunit (SSU) processome, composed of more than 70 proteins and the RNA chaperone small nucleolar RNA (snoRNA) U3. Hydroxylation at Pro-62 affects translation termination efficiency.

The protein resides in the cytoplasm. It is found in the cytosol. It localises to the rough endoplasmic reticulum. The protein localises to the nucleus. Its subcellular location is the nucleolus. Functionally, component of the ribosome, a large ribonucleoprotein complex responsible for the synthesis of proteins in the cell. The small ribosomal subunit (SSU) binds messenger RNAs (mRNAs) and translates the encoded message by selecting cognate aminoacyl-transfer RNA (tRNA) molecules. The large subunit (LSU) contains the ribosomal catalytic site termed the peptidyl transferase center (PTC), which catalyzes the formation of peptide bonds, thereby polymerizing the amino acids delivered by tRNAs into a polypeptide chain. The nascent polypeptides leave the ribosome through a tunnel in the LSU and interact with protein factors that function in enzymatic processing, targeting, and the membrane insertion of nascent chains at the exit of the ribosomal tunnel. Plays an important role in translational accuracy. Part of the small subunit (SSU) processome, first precursor of the small eukaryotic ribosomal subunit. During the assembly of the SSU processome in the nucleolus, many ribosome biogenesis factors, an RNA chaperone and ribosomal proteins associate with the nascent pre-rRNA and work in concert to generate RNA folding, modifications, rearrangements and cleavage as well as targeted degradation of pre-ribosomal RNA by the RNA exosome. This Bos taurus (Bovine) protein is Small ribosomal subunit protein uS12 (RPS23).